We begin with the raw amino-acid sequence, 263 residues long: 4'-phosphopantetheinyl transferase pptA (263 aa).

This sequence belongs to the P-Pant transferase superfamily.

The catalysed reaction is apo-[ACP] + CoA = holo-[ACP] + adenosine 3',5'-bisphosphate + H(+). Transfers the 4'-phosphopantetheine moiety from coenzyme A to a Ser of an acyl-carrier-protein. Activates the peptidyl carrier protein (PCP) domains of surfactin synthas. The sequence is that of 4'-phosphopantetheinyl transferase pptA (pptA) from Paxillus involutus (Naked brimcap).